The sequence spans 78 residues: Putative defensin-like protein 202 (78 aa).

A signal peptide spans 1 to 29; that stretch reads MAKTQNFVCFTAVLLILILVSTEIPMIEG. Intrachain disulfides connect C44/C65, C49/C74, and C53/C76.

Belongs to the DEFL family.

The protein localises to the secreted. The protein is Putative defensin-like protein 202 of Arabidopsis thaliana (Mouse-ear cress).